Here is a 452-residue protein sequence, read N- to C-terminus: Probable alpha-galactosidase B (452 aa).

A signal peptide spans 1–24 (MLHRATTTAAAAAAAALLLCPVQA). A disulfide bridge connects residues cysteine 47 and cysteine 79. Asparagine 87 and asparagine 138 each carry an N-linked (GlcNAc...) asparagine glycan. A disulfide bridge connects residues cysteine 129 and cysteine 159. Aspartate 157 functions as the Nucleophile in the catalytic mechanism. Asparagine 184 is a glycosylation site (N-linked (GlcNAc...) asparagine). A substrate-binding site is contributed by 231-235 (DWGQA). The active-site Proton donor is the aspartate 253. Asparagine 292, asparagine 391, asparagine 409, and asparagine 410 each carry an N-linked (GlcNAc...) asparagine glycan.

It belongs to the glycosyl hydrolase 27 family.

It is found in the secreted. It carries out the reaction Hydrolysis of terminal, non-reducing alpha-D-galactose residues in alpha-D-galactosides, including galactose oligosaccharides, galactomannans and galactolipids.. Functionally, hydrolyzes a variety of simple alpha-D-galactoside as well as more complex molecules such as oligosaccharides and polysaccharides. The polypeptide is Probable alpha-galactosidase B (Talaromyces emersonii (Thermophilic fungus)).